The sequence spans 280 residues: Nucleotide-binding protein CV_3336 (280 aa).

8-15 contacts ATP; sequence GLSGSGKS. Position 57–60 (57–60) interacts with GTP; sequence DTRS.

This sequence belongs to the RapZ-like family.

Its function is as follows. Displays ATPase and GTPase activities. The polypeptide is Nucleotide-binding protein CV_3336 (Chromobacterium violaceum (strain ATCC 12472 / DSM 30191 / JCM 1249 / CCUG 213 / NBRC 12614 / NCIMB 9131 / NCTC 9757 / MK)).